A 442-amino-acid chain; its full sequence is Asparagine--tRNA ligase (442 aa).

This sequence belongs to the class-II aminoacyl-tRNA synthetase family. Homodimer.

The protein resides in the cytoplasm. It carries out the reaction tRNA(Asn) + L-asparagine + ATP = L-asparaginyl-tRNA(Asn) + AMP + diphosphate + H(+). This chain is Asparagine--tRNA ligase, found in Koribacter versatilis (strain Ellin345).